The following is a 248-amino-acid chain: Probable phosphatase VPA0505 (248 aa).

9 residues coordinate Zn(2+): His8, His10, His16, His41, Glu74, His102, His132, Asp194, and His196.

This sequence belongs to the PHP family. Requires Zn(2+) as cofactor.

This Vibrio parahaemolyticus serotype O3:K6 (strain RIMD 2210633) protein is Probable phosphatase VPA0505.